We begin with the raw amino-acid sequence, 335 residues long: Ketol-acid reductoisomerase (NADP(+)) (335 aa).

The KARI N-terminal Rossmann domain maps to 1-182 (MATIIYDNET…GATRAGVYET (182 aa)). NADP(+) contacts are provided by residues 25 to 28 (YGSQ), Arg48, Ser51, Ser53, and 83 to 86 (DEKQ). Residue His108 is part of the active site. Gly134 provides a ligand contact to NADP(+). The region spanning 183 to 328 (TFREETETDL…KEIRANIPWL (146 aa)) is the KARI C-terminal knotted domain. Mg(2+) is bound by residues Asp191, Glu195, Glu227, and Glu231. Ser252 lines the substrate pocket.

This sequence belongs to the ketol-acid reductoisomerase family. Requires Mg(2+) as cofactor.

The enzyme catalyses (2R)-2,3-dihydroxy-3-methylbutanoate + NADP(+) = (2S)-2-acetolactate + NADPH + H(+). It catalyses the reaction (2R,3R)-2,3-dihydroxy-3-methylpentanoate + NADP(+) = (S)-2-ethyl-2-hydroxy-3-oxobutanoate + NADPH + H(+). It participates in amino-acid biosynthesis; L-isoleucine biosynthesis; L-isoleucine from 2-oxobutanoate: step 2/4. The protein operates within amino-acid biosynthesis; L-valine biosynthesis; L-valine from pyruvate: step 2/4. Its function is as follows. Involved in the biosynthesis of branched-chain amino acids (BCAA). Catalyzes an alkyl-migration followed by a ketol-acid reduction of (S)-2-acetolactate (S2AL) to yield (R)-2,3-dihydroxy-isovalerate. In the isomerase reaction, S2AL is rearranged via a Mg-dependent methyl migration to produce 3-hydroxy-3-methyl-2-ketobutyrate (HMKB). In the reductase reaction, this 2-ketoacid undergoes a metal-dependent reduction by NADPH to yield (R)-2,3-dihydroxy-isovalerate. This chain is Ketol-acid reductoisomerase (NADP(+)), found in Methanosarcina acetivorans (strain ATCC 35395 / DSM 2834 / JCM 12185 / C2A).